A 262-amino-acid chain; its full sequence is Type II restriction enzyme MspI (262 aa).

The enzyme catalyses Endonucleolytic cleavage of DNA to give specific double-stranded fragments with terminal 5'-phosphates.. Functionally, a P subtype restriction enzyme that recognizes the double-stranded sequence 5'-CCGG-3' and cleaves after C-1. The polypeptide is Type II restriction enzyme MspI (mspIR) (Moraxella sp).